A 121-amino-acid chain; its full sequence is MARIAGVNIPNHQHTEIGLTAIFGIGRTRARSICVASGVAFSKKVKDLTDADLEKLREEVGKFVVEGDLRREVTMNIKRLMDLGCYRGVRHRKGLPMRGQRTRTNARTRKGPRRAAQALKK.

The interval Arg-92–Lys-121 is disordered.

It belongs to the universal ribosomal protein uS13 family. Part of the 30S ribosomal subunit. Forms a loose heterodimer with protein S19. Forms two bridges to the 50S subunit in the 70S ribosome.

Its function is as follows. Located at the top of the head of the 30S subunit, it contacts several helices of the 16S rRNA. In the 70S ribosome it contacts the 23S rRNA (bridge B1a) and protein L5 of the 50S subunit (bridge B1b), connecting the 2 subunits; these bridges are implicated in subunit movement. Contacts the tRNAs in the A and P-sites. In Burkholderia thailandensis (strain ATCC 700388 / DSM 13276 / CCUG 48851 / CIP 106301 / E264), this protein is Small ribosomal subunit protein uS13.